We begin with the raw amino-acid sequence, 468 residues long: Serine--tRNA ligase (468 aa).

272 to 274 contacts L-serine; the sequence is TAE. 303 to 305 lines the ATP pocket; the sequence is RAE. Glu-326 contributes to the L-serine binding site. ATP is bound at residue 390-393; that stretch reads EISS. Ser-426 contributes to the L-serine binding site.

This sequence belongs to the class-II aminoacyl-tRNA synthetase family. Type-1 seryl-tRNA synthetase subfamily. As to quaternary structure, homodimer. The tRNA molecule binds across the dimer.

It is found in the cytoplasm. It catalyses the reaction tRNA(Ser) + L-serine + ATP = L-seryl-tRNA(Ser) + AMP + diphosphate + H(+). The enzyme catalyses tRNA(Sec) + L-serine + ATP = L-seryl-tRNA(Sec) + AMP + diphosphate + H(+). It participates in aminoacyl-tRNA biosynthesis; selenocysteinyl-tRNA(Sec) biosynthesis; L-seryl-tRNA(Sec) from L-serine and tRNA(Sec): step 1/1. Catalyzes the attachment of serine to tRNA(Ser). Is also able to aminoacylate tRNA(Sec) with serine, to form the misacylated tRNA L-seryl-tRNA(Sec), which will be further converted into selenocysteinyl-tRNA(Sec). This is Serine--tRNA ligase from Xanthobacter autotrophicus (strain ATCC BAA-1158 / Py2).